The sequence spans 375 residues: Neuropeptide Y receptor type 4 (375 aa).

The Extracellular portion of the chain corresponds to 1–39 (MNTSHLMASLSPAFLQGKNGTNPLDSLYNLSDGCQDSAD). N-linked (GlcNAc...) asparagine glycans are attached at residues Asn-2, Asn-19, and Asn-29. A helical membrane pass occupies residues 40 to 60 (LLAFIITTYSVETVLGVLGNL). Topologically, residues 61 to 78 (CLIFVTTRQKEKSNVTNL) are cytoplasmic. A helical transmembrane segment spans residues 79 to 99 (LIANLAFSDFLMCLICQPLTV). The Extracellular segment spans residues 100 to 116 (TYTIMDYWIFGEVLCKM). A disulfide bridge links Cys-114 with Cys-201. The helical transmembrane segment at 117 to 137 (LTFIQCMSVTVSILSLVLVAL) threads the bilayer. Residues 138-155 (ERHQLIINPTGWKPSISQ) are Cytoplasmic-facing. The chain crosses the membrane as a helical span at residues 156 to 176 (AYLGIVVIWFISCFLSLPFLA). Residues 177–211 (NSILNDLFHYNHSKVVEFLEDKVVCFVSWSSDHHR) lie on the Extracellular side of the membrane. N-linked (GlcNAc...) asparagine glycosylation is present at Asn-187. Residues 212 to 232 (LIYTTFLLLFQYCVPLAFILV) traverse the membrane as a helical segment. Residues 233–262 (CYMRIYQRLQRQRRAFHTHTCSSRVGQMKR) lie on the Cytoplasmic side of the membrane. The helical transmembrane segment at 263-283 (INGMLMAMVTAFAVLWLPLHV) threads the bilayer. Residues 284 to 301 (FNTLEDWYQEAIPACHGN) are Extracellular-facing. The chain crosses the membrane as a helical span at residues 302 to 322 (LIFLMCHLFAMASTCVNPFIY). Residues 323–375 (GFLNINFKKDIKALVLTCRCRPPQGEPEPLPLSTVHTDLSKGSMRMGSKSNVM) are Cytoplasmic-facing. Cys-340 is lipidated: S-palmitoyl cysteine.

It belongs to the G-protein coupled receptor 1 family. Detected in colon and brain.

It localises to the cell membrane. In terms of biological role, g protein-coupled receptor for PPY/pancreatic polypeptide/PP that is negatively coupled to cAMP. Has much lower affinity for the NPY/neuropeptide Y and PYY/peptide YY. This chain is Neuropeptide Y receptor type 4 (Npy4r), found in Rattus norvegicus (Rat).